The sequence spans 105 residues: Mitomycin resistance protein McrB (105 aa).

Functionally, involved in mitomycin resistance. May operate with McrA or may be a type of transcriptional activator protein. This is Mitomycin resistance protein McrB (mcrB) from Streptomyces lavendulae.